Here is a 230-residue protein sequence, read N- to C-terminus: MTGSIRSKLSAIDVRQLGTVDYRTAWQLQRELADARVAGGADTLLLLEHPAVYTAGRRTETHERPIDGTPVVDTDRGGKITWHGPGQLVGYPIIGLAEPLDVVNYVRRLEESLIQVCADLGLHAGRVDGRSGVWLPGRPARKVAAIGVRVSRATTLHGFALNCDCDLAAFTAIVPCGISDAAVTSLSAELGRTVTVDEVRATVAAAVCAALDGVLPVGDRVPSHAVPSPL.

Positions 38–215 (AGGADTLLLL…AVCAALDGVL (178 aa)) constitute a BPL/LPL catalytic domain. Residues 76–83 (RGGKITWH), 145–147 (AIG), and 158–160 (GFA) contribute to the substrate site. The Acyl-thioester intermediate role is filled by Cys176.

The protein belongs to the LipB family.

It is found in the cytoplasm. The catalysed reaction is octanoyl-[ACP] + L-lysyl-[protein] = N(6)-octanoyl-L-lysyl-[protein] + holo-[ACP] + H(+). It participates in protein modification; protein lipoylation via endogenous pathway; protein N(6)-(lipoyl)lysine from octanoyl-[acyl-carrier-protein]: step 1/2. In terms of biological role, catalyzes the transfer of endogenously produced octanoic acid from octanoyl-acyl-carrier-protein onto the lipoyl domains of lipoate-dependent enzymes. Lipoyl-ACP can also act as a substrate although octanoyl-ACP is likely to be the physiological substrate. This chain is Octanoyltransferase, found in Mycobacterium tuberculosis (strain ATCC 25177 / H37Ra).